The following is a 186-amino-acid chain: Cytochrome c oxidase polypeptide 5, mitochondrial (186 aa).

The transit peptide at 1–20 (MYLSKIICKKVPMKLLCTRN) directs the protein to the mitochondrion. Residues 21–107 (AATVSAAATN…GPRAFSHISQ (87 aa)) lie on the Mitochondrial matrix side of the membrane. A helical membrane pass occupies residues 108-128 (KTVFWGTVAGLTIGVVLFGLI). Residues 129-186 (RTQAAPSPRTMTREWQEKSNEYMKENKINPISGEASEGFKGRGQISGGIFSPSEKDKK) are Mitochondrial intermembrane-facing. Residues 149-186 (EYMKENKINPISGEASEGFKGRGQISGGIFSPSEKDKK) form a disordered region.

It belongs to the cytochrome c oxidase IV family. As to quaternary structure, component of the cytochrome c oxidase (complex IV, CIV), a multisubunit enzyme composed of a catalytic core of 3 subunits and seevral supernumerary subunits. The complex exists as a monomer or a dimer and forms supercomplexes (SCs) in the inner mitochondrial membrane with ubiquinol-cytochrome c oxidoreductase (cytochrome b-c1 complex, complex III, CIII).

The protein localises to the mitochondrion inner membrane. Its pathway is energy metabolism; oxidative phosphorylation. Functionally, component of the cytochrome c oxidase, the last enzyme in the mitochondrial electron transport chain which drives oxidative phosphorylation. The respiratory chain contains 3 multisubunit complexes succinate dehydrogenase (complex II, CII), ubiquinol-cytochrome c oxidoreductase (cytochrome b-c1 complex, complex III, CIII) and cytochrome c oxidase (complex IV, CIV), that cooperate to transfer electrons derived from NADH and succinate to molecular oxygen, creating an electrochemical gradient over the inner membrane that drives transmembrane transport and the ATP synthase. Cytochrome c oxidase is the component of the respiratory chain that catalyzes the reduction of oxygen to water. Electrons originating from reduced cytochrome c in the intermembrane space (IMS) are transferred via the dinuclear copper A center (CU(A)) of subunit 2 and heme A of subunit 1 to the active site in subunit 1, a binuclear center (BNC) formed by heme A3 and copper B (CU(B)). The BNC reduces molecular oxygen to 2 water molecules using 4 electrons from cytochrome c in the IMS and 4 protons from the mitochondrial matrix. This chain is Cytochrome c oxidase polypeptide 5, mitochondrial (cox5), found in Schizosaccharomyces pombe (strain 972 / ATCC 24843) (Fission yeast).